Reading from the N-terminus, the 231-residue chain is 5'-methylthioadenosine/S-adenosylhomocysteine nucleosidase (231 aa).

Glutamate 12 acts as the Proton acceptor in catalysis. Substrate-binding positions include glycine 78, methionine 153, and 174 to 175 (ME). Residue aspartate 198 is the Proton donor of the active site.

This sequence belongs to the PNP/UDP phosphorylase family. MtnN subfamily.

It carries out the reaction S-adenosyl-L-homocysteine + H2O = S-(5-deoxy-D-ribos-5-yl)-L-homocysteine + adenine. It catalyses the reaction S-methyl-5'-thioadenosine + H2O = 5-(methylsulfanyl)-D-ribose + adenine. The enzyme catalyses 5'-deoxyadenosine + H2O = 5-deoxy-D-ribose + adenine. Its pathway is amino-acid biosynthesis; L-methionine biosynthesis via salvage pathway; S-methyl-5-thio-alpha-D-ribose 1-phosphate from S-methyl-5'-thioadenosine (hydrolase route): step 1/2. Catalyzes the irreversible cleavage of the glycosidic bond in both 5'-methylthioadenosine (MTA) and S-adenosylhomocysteine (SAH/AdoHcy) to adenine and the corresponding thioribose, 5'-methylthioribose and S-ribosylhomocysteine, respectively. Also cleaves 5'-deoxyadenosine, a toxic by-product of radical S-adenosylmethionine (SAM) enzymes, into 5-deoxyribose and adenine. This is 5'-methylthioadenosine/S-adenosylhomocysteine nucleosidase from Psychromonas ingrahamii (strain DSM 17664 / CCUG 51855 / 37).